We begin with the raw amino-acid sequence, 61 residues long: Metallothionein-1 (61 aa).

An N-acetylmethionine modification is found at Met1. The tract at residues 1 to 29 (MDPNCSCSTGGSCTCSSSCGCKNCKCTSC) is beta. 20 residues coordinate a divalent metal cation: Cys5, Cys7, Cys13, Cys15, Cys19, Cys21, Cys24, Cys26, Cys29, Cys33, Cys34, Cys36, Cys37, Cys41, Cys44, Cys48, Cys50, Cys57, Cys59, and Cys60. The segment at 30 to 61 (KKSCCSCCPVGCSKCAQGCVCKGASDKCTCCA) is alpha.

It belongs to the metallothionein superfamily. Type 1 family.

Its function is as follows. Metallothioneins have a high content of cysteine residues that bind various heavy metals; these proteins are transcriptionally regulated by both heavy metals and glucocorticoids. The polypeptide is Metallothionein-1 (Mt1) (Rattus norvegicus (Rat)).